The chain runs to 600 residues: DNA mismatch repair protein MutL (600 aa).

A disordered region spans residues 327-405 (DGSRAATTGA…FSPQPAAAEP (79 aa)). The span at 349 to 367 (PNSQRPQTAWSAETSSSRP) shows a compositional bias: polar residues.

This sequence belongs to the DNA mismatch repair MutL/HexB family.

This protein is involved in the repair of mismatches in DNA. It is required for dam-dependent methyl-directed DNA mismatch repair. May act as a 'molecular matchmaker', a protein that promotes the formation of a stable complex between two or more DNA-binding proteins in an ATP-dependent manner without itself being part of a final effector complex. This is DNA mismatch repair protein MutL from Rhizobium johnstonii (strain DSM 114642 / LMG 32736 / 3841) (Rhizobium leguminosarum bv. viciae).